The sequence spans 466 residues: Myocardial zonula adherens protein (466 aa).

A compositionally biased stretch (polar residues) spans 1–10 (MLRSTSTVTL). The signal sequence occupies residues 1–16 (MLRSTSTVTLFSGGGA). Residues 1 to 68 (MLRSTSTVTL…SNGESTKRLP (68 aa)) form a disordered region. A compositionally biased stretch (basic and acidic residues) spans 45–55 (TEKKIERKDQP). 2 coiled-coil regions span residues 95 to 137 (NQLK…QDLS) and 187 to 415 (HIKD…LTET).

The protein belongs to the MYZAP family. As to quaternary structure, interacts with DSP, MPRIP and TJP1/ZO1. Interaction with MPRIP inhibits the activation of transcription factor SRF. Interacts with GRIN1. Interacts with DYNLL1. In terms of tissue distribution, detected in heart myocardium and lung.

The protein localises to the cytoplasm. It is found in the cytoskeleton. The protein resides in the cell membrane. Its subcellular location is the myofibril. It localises to the sarcomere. The protein localises to the i band. It is found in the z line. The protein resides in the cell junction. Functionally, plays a role in cellular signaling via Rho-related GTP-binding proteins and activation of transcription factor SRF. Targets TJP1 to cell junctions. In cortical neurons, may play a role in glutaminergic signal transduction through interaction with the NMDA receptor subunit GRIN1. The polypeptide is Myocardial zonula adherens protein (Myzap) (Mus musculus (Mouse)).